Here is a 277-residue protein sequence, read N- to C-terminus: Putative thiosulfate sulfurtransferase (277 aa).

2 consecutive Rhodanese domains span residues 18–125 and 154–274; these read HAPK…PLSS and AINV…APIE. C233 functions as the Cysteine persulfide intermediate in the catalytic mechanism. Position 238 (R238) interacts with substrate.

It carries out the reaction thiosulfate + hydrogen cyanide = thiocyanate + sulfite + 2 H(+). In terms of biological role, may be a sulfotransferase involved in the formation of thiosulfate. The polypeptide is Putative thiosulfate sulfurtransferase (cysA1) (Mycobacterium tuberculosis (strain CDC 1551 / Oshkosh)).